The primary structure comprises 66 residues: Large ribosomal subunit protein bL33c (66 aa).

The protein belongs to the bacterial ribosomal protein bL33 family.

The protein resides in the plastid. It localises to the chloroplast. The sequence is that of Large ribosomal subunit protein bL33c from Arabis hirsuta (Hairy rock-cress).